The chain runs to 583 residues: R-linalool synthase QH5, chloroplastic (583 aa).

A chloroplast-targeting transit peptide spans 1 to 40; that stretch reads MASISLFPYSILKQTSPLARGTAYNRIYSTKTTGITVDVA. R298, D335, D339, R476, and D479 together coordinate (2E)-geranyl diphosphate. Mg(2+)-binding residues include D335 and D339. The short motif at 335–339 is the DDXXD motif element; the sequence is DDVYD. Residues D479, T483, and E487 each contribute to the Mg(2+) site. Residue D492 participates in K(+) binding.

It belongs to the terpene synthase family. Tpsb subfamily. Requires Mg(2+) as cofactor. Mn(2+) is required as a cofactor. The cofactor is K(+). In terms of tissue distribution, expressed in every aerial organ except for the stem stele of mature plants. Not detected in roots.

It localises to the plastid. The protein localises to the chloroplast. It carries out the reaction (2E)-geranyl diphosphate + H2O = (R)-linalool + diphosphate. It participates in secondary metabolite biosynthesis; terpenoid biosynthesis. Its function is as follows. Monoterpene synthase that catalyzes the formation of (3R)-linalool from geranyl diphosphate, but not from isopentenyl diphosphate, dimethylallyl diphosphate, chrysanthemyl diphosphate, farnesyl diphosphate, (+)-copalyl diphosphate or geranylgeranyl diphosphate. This chain is R-linalool synthase QH5, chloroplastic, found in Artemisia annua (Sweet wormwood).